Here is a 300-residue protein sequence, read N- to C-terminus: Protein ARMCX6 (300 aa).

Residues Met-1–Glu-6 are Mitochondrial intermembrane-facing. 2 mitochondrion outer membrane (MOM)-targeting sequence regions span residues Met-1–Glu-6 and Lys-26–Lys-36. Residues Val-7 to Leu-27 form a helical; Signal-anchor membrane-spanning segment. At Thr-28–Pro-300 the chain is on the cytoplasmic side. Disordered regions lie at residues Glu-35–Glu-54 and Trp-69–Pro-99.

This sequence belongs to the eutherian X-chromosome-specific Armcx family.

It localises to the mitochondrion. The protein localises to the mitochondrion outer membrane. Its function is as follows. May regulate the dynamics and distribution of mitochondria in neural cells. The protein is Protein ARMCX6 (ARMCX6) of Homo sapiens (Human).